A 494-amino-acid polypeptide reads, in one-letter code: Sphingosine-1-phosphate transporter MFSD2B (494 aa).

Pro residues predominate over residues 1 to 12 (MSVPHGPTPAPV). A disordered region spans residues 1 to 26 (MSVPHGPTPAPVAEPHTQEPGSDKRD). 10 consecutive transmembrane segments (helical) span residues 103-123 (LMPWALGCMPLIALAYFFLWF), 140-160 (CLFQALATFFQVPYTALTMIL), 179-199 (MAGTLMGATVHGLIVSSAHGS), 223-243 (IAAAVVALTYPVCGSLLCLGV), 277-297 (VVSFLFISAAVQVEQSYLVLF), 310-330 (NLVLIILVSAVLSTPLWEWVL), 339-359 (AFGICVMVPFSILLAAVPSAP), 360-380 (VAYVVAFVSGVSIAVSLLLPW), 402-422 (TIFYSSYVFFTKLSGAGALGI), and 449-469 (VLIGAVPTCMILIGLCILLVG). The segment at 473-494 (KMPRQDTSSQLSLRRRTSYSLA) is disordered. Residues 485 to 494 (LRRRTSYSLA) show a composition bias toward basic residues.

It belongs to the major facilitator superfamily. As to expression, widely expressed with highest expression in spleen, lung and testis. Predominantly expressed in erythroid lineages giving rise to erythrocytes and platelets, but absent in lymphoid lineages.

It localises to the cell membrane. The catalysed reaction is sphing-4-enine 1-phosphate(in) = sphing-4-enine 1-phosphate(out). The enzyme catalyses sphinganine 1-phosphate(in) = sphinganine 1-phosphate(out). It catalyses the reaction sphinga-4E,14Z-dienine-1-phosphate(in) = sphinga-4E,14Z-dienine-1-phosphate(out). Lipid transporter that specifically mediates export of sphingosine-1-phosphate in red blood cells and platelets. Sphingosine-1-phosphate is a signaling sphingolipid and its export from red blood cells into in the plasma is required for red blood cell morphology. Sphingosine-1-phosphate export from platelets is required for platelet aggregation and thrombus formation. Mediates the export of different sphingosine-1-phosphate (S1P) species, including S1P(d18:0) (sphinganine 1-phosphate), S1P (d18:1) (sphing-4-enine 1-phosphate) and S1P (d18:2) (sphinga-4E,14Z-dienine-1-phosphate). Release of sphingosine-1-phosphate is facilitated by a proton gradient. In contrast, cations, such as sodium, are not required to drive sphingosine-1-phosphate transport. In addition to export, also able to mediate S1P import. Does not transport lysophosphatidylcholine (LPC). The polypeptide is Sphingosine-1-phosphate transporter MFSD2B (Mus musculus (Mouse)).